A 409-amino-acid polypeptide reads, in one-letter code: Glucan endo-1,6-beta-glucosidase B (409 aa).

An N-terminal signal peptide occupies residues 1–16 (MKFILPLFTSLPVALA). Asparagine 35 carries an N-linked (GlcNAc...) asparagine glycan. The active-site Proton donor is the glutamate 228. Glutamate 330 functions as the Nucleophile in the catalytic mechanism.

Belongs to the glycosyl hydrolase 5 (cellulase A) family.

It localises to the secreted. It catalyses the reaction Random hydrolysis of (1-&gt;6)-linkages in (1-&gt;6)-beta-D-glucans.. In terms of biological role, beta-glucanases participate in the metabolism of beta-glucan, the main structural component of the cell wall. Acts on lutean, pustulan and 1,6-oligo-beta-D-glucosides. This is Glucan endo-1,6-beta-glucosidase B (exgB) from Emericella nidulans (strain FGSC A4 / ATCC 38163 / CBS 112.46 / NRRL 194 / M139) (Aspergillus nidulans).